A 110-amino-acid polypeptide reads, in one-letter code: Protein mistic (110 aa).

At 1–7 (MFCTFFE) the chain is on the cytoplasmic side. A helical membrane pass occupies residues 8 to 22 (KHHRKWDILLEKSTG). The Extracellular segment spans residues 23-31 (VMEAMKVTS). The chain crosses the membrane as a helical span at residues 32 to 55 (EEKEQLSTAIDRMNEGLDAFIQLY). Over 56–66 (NESEIDEPLIQ) the chain is Cytoplasmic. The helical transmembrane segment at 67 to 81 (LDDDTAELMKQARDM) threads the bilayer. The Extracellular segment spans residues 82 to 88 (YGQEKLN). Residues 89 to 102 (EKLNTIIKQILSIS) form a helical membrane-spanning segment. Residues 103–110 (VSEEGEKE) lie on the Cytoplasmic side of the membrane.

As to quaternary structure, monomer.

It localises to the cell membrane. Functionally, chaperone that facilitates the production and integration of integral membrane proteins into the bacterial lipid bilayer. The chain is Protein mistic (mstX) from Bacillus subtilis (strain 168).